A 144-amino-acid polypeptide reads, in one-letter code: Large ribosomal subunit protein uL15 (144 aa).

The segment at 1 to 58 is disordered; the sequence is MKLNNLSPAPGSKHAEKRVGRGIGSGLGKTGGRGHKGQKSRSGGSVKPGFEGGQMPLQ. Residues 21 to 31 show a composition bias toward gly residues; the sequence is RGIGSGLGKTG.

The protein belongs to the universal ribosomal protein uL15 family. Part of the 50S ribosomal subunit.

In terms of biological role, binds to the 23S rRNA. In Chromohalobacter salexigens (strain ATCC BAA-138 / DSM 3043 / CIP 106854 / NCIMB 13768 / 1H11), this protein is Large ribosomal subunit protein uL15.